The sequence spans 686 residues: MKPPFLLALVVCSVVSTNLKMVSKRNSVDGCIDWSVDLKTYMALAGEPVRVKCALFYSYIRTNYSTAQSTGLRLMWYKNKGDLEEPIIFSEVRMSKEEDSIWFHSAEAQDSGFYTCVLRNSTYCMKVSMSLTVAENESGLCYNSRIRYLEKSEVTKRKEISCPDMDDFKKSDQEPDVVWYKECKPKMWRSIIIQKGNALLIQEVQEEDGGNYTCELKYEGKLVRRTTELKVTALLTDKPPKPLFPMENQPSVIDVQLGKPLNIPCKAFFGFSGESGPMIYWMKGEKFIEELAGHIREGEIRLLKEHLGEKEVELALIFDSVVEADLANYTCHVENRNGRKHASVLLRKKDLIYKIELAGGLGAIFLLLVLLVVIYKCYNIELMLFYRQHFGADETNDDNKEYDAYLSYTKVDQDTLDCDNPEEEQFALEVLPDVLEKHYGYKLFIPERDLIPSGTYMEDLTRYVEQSRRLIIVLTPDYILRRGWSIFELESRLHNMLVSGEIKVILIECTELKGKVNCQEVESLKRSIKLLSLIKWKGSKSSKLNSKFWKHLVYEMPIKKKEMLPRCHVLDSAEQGLFGELQPIPSIAMTSTSATLVSSQADLPEFHPSDSMQIRHCCRGYKHEIPATTLPVPSLGNHHTYCNLPLTLLNGQLPLNNTLKDTQEFHRNSSLLPLSSKELSFTSDIW.

The signal sequence occupies residues 1-16 (MKPPFLLALVVCSVVS). Over 17-354 (TNLKMVSKRN…LLRKKDLIYK (338 aa)) the chain is Extracellular. An Ig-like C2-type 1 domain is found at 18–132 (NLKMVSKRNS…YCMKVSMSLT (115 aa)). A disulfide bridge links C53 with C116. Residues N63, N120, N136, N211, and N328 are each glycosylated (N-linked (GlcNAc...) asparagine). 2 consecutive Ig-like C2-type domains span residues 141–232 (CYNS…LKVT) and 239–347 (PPKP…VLLR). Disulfide bonds link C162–C214 and C265–C331. A helical transmembrane segment spans residues 355 to 375 (IELAGGLGAIFLLLVLLVVIY). Residues 376–686 (KCYNIELMLF…KELSFTSDIW (311 aa)) lie on the Cytoplasmic side of the membrane. Positions 400–556 (KEYDAYLSYT…KFWKHLVYEM (157 aa)) constitute a TIR domain. The active site involves E488.

It belongs to the interleukin-1 receptor family. As to expression, detected at low levels in fetal and adult brain, in particular in the frontal lobe, temporal lobe and cerebellum. Detected at very low levels in skin, liver, fetal ovary and in placenta.

The protein resides in the membrane. It catalyses the reaction NAD(+) + H2O = ADP-D-ribose + nicotinamide + H(+). This is X-linked interleukin-1 receptor accessory protein-like 2 (IL1RAPL2) from Homo sapiens (Human).